A 370-amino-acid polypeptide reads, in one-letter code: MKGMKEYIKKLEEGSDLSSEEAEAAIGEILSTAEDEEIGAFLLALRAKGEKPQEIAGFVRGMKQAGNTIKPVTPFRVIDTCGTGGDGLNTINVSTAAAIVTAAAGVPVAKHGNRAATSMSGSSDVLEALGIKVDLTPGQVRKTIEKIGIGFMFAPVFHPAMKRVAGVRKKLGVRTVFNILGPLTNPAGAKGQVVGVFDKKLCEPIAYALAELGTEHALVVHGDGMDEISNTGETFVAELKDGEVSTYTITPEAMGMLRAKPEDIKGGTPKENARDLLCIFKGQKGPKRDLVILNAAAALYVSGIVGSIRQAIPIAEDAIDSGKVMVKFNQFRNFTAELSIQGKKEGSCPGEAFLASSDTSVLSPASGEKA.

Residues Gly-82, 85-86 (GD), Thr-90, 92-95 (NVST), 110-118 (KHGNRAATS), and Ser-122 each bind 5-phospho-alpha-D-ribose 1-diphosphate. Gly-82 contributes to the anthranilate binding site. Ser-94 is a Mg(2+) binding site. Asn-113 provides a ligand contact to anthranilate. Arg-168 is a binding site for anthranilate. Mg(2+) is bound by residues Asp-226 and Glu-227.

It belongs to the anthranilate phosphoribosyltransferase family. Homodimer. Mg(2+) is required as a cofactor.

The enzyme catalyses N-(5-phospho-beta-D-ribosyl)anthranilate + diphosphate = 5-phospho-alpha-D-ribose 1-diphosphate + anthranilate. The protein operates within amino-acid biosynthesis; L-tryptophan biosynthesis; L-tryptophan from chorismate: step 2/5. In terms of biological role, catalyzes the transfer of the phosphoribosyl group of 5-phosphorylribose-1-pyrophosphate (PRPP) to anthranilate to yield N-(5'-phosphoribosyl)-anthranilate (PRA). This Methanosarcina acetivorans (strain ATCC 35395 / DSM 2834 / JCM 12185 / C2A) protein is Anthranilate phosphoribosyltransferase.